A 274-amino-acid chain; its full sequence is Syntaxin-12 (274 aa).

Disordered regions lie at residues 1–20 and 128–147; these read MSYG…PQPR and EKES…EDRQ. N-acetylserine is present on Ser-2. Topologically, residues 2–250 are cytoplasmic; sequence SYGPLDMYRN…AYYQKKSRKK (249 aa). A coiled-coil region spans residues 33 to 130; it reads IQRISQATAQ…QRKVSEKEKE (98 aa). 4 positions are modified to phosphoserine: Ser-139, Ser-142, Ser-218, and Ser-225. One can recognise a t-SNARE coiled-coil homology domain in the interval 178-240; that stretch reads LELIKERETA…ERATDQLQRA (63 aa). The helical; Anchor for type IV membrane protein transmembrane segment at 251-271 threads the bilayer; sequence MCILVLVLSVIVTVLVVVIWV. Over 272-274 the chain is Vesicular; the sequence is ASK.

It belongs to the syntaxin family. As to quaternary structure, associates with the BLOC-1 complex. Interacts with BLOC1S6. Interacts with NAPA and SNAP23. Identified in a complex containing STX6, STX12, VAMP4 and VTI1A. Interacts with GRIPAP1. Forms a complex with GRIP1, GRIA2 and NSG1; controls the intracellular fate of AMPAR and the endosomal sorting of the GRIA2 subunit toward recycling and membrane targeting. Interacts with NSG1. Interacts with TPC1. Interacts (via N-terminus) with VPS13B.

It localises to the endosome membrane. The protein localises to the golgi apparatus membrane. It is found in the endomembrane system. Its subcellular location is the early endosome membrane. The protein resides in the recycling endosome membrane. Functionally, SNARE promoting fusion of transport vesicles with target membranes. Together with SNARE STX6, promotes movement of vesicles from endosomes to the cell membrane, and may therefore function in the endocytic recycling pathway. Through complex formation with GRIP1, GRIA2 and NSG1 controls the intracellular fate of AMPAR and the endosomal sorting of the GRIA2 subunit toward recycling and membrane targeting. The protein is Syntaxin-12 (Stx12) of Mus musculus (Mouse).